The chain runs to 562 residues: Sulfite reductase [NADPH] hemoprotein beta-component (562 aa).

Residues C426, C432, C471, and C475 each coordinate [4Fe-4S] cluster. C475 is a siroheme binding site.

Belongs to the nitrite and sulfite reductase 4Fe-4S domain family. In terms of assembly, alpha(8)-beta(8). The alpha component is a flavoprotein, the beta component is a hemoprotein. Requires siroheme as cofactor. The cofactor is [4Fe-4S] cluster.

The enzyme catalyses hydrogen sulfide + 3 NADP(+) + 3 H2O = sulfite + 3 NADPH + 4 H(+). It functions in the pathway sulfur metabolism; hydrogen sulfide biosynthesis; hydrogen sulfide from sulfite (NADPH route): step 1/1. Functionally, component of the sulfite reductase complex that catalyzes the 6-electron reduction of sulfite to sulfide. This is one of several activities required for the biosynthesis of L-cysteine from sulfate. The polypeptide is Sulfite reductase [NADPH] hemoprotein beta-component (Shewanella denitrificans (strain OS217 / ATCC BAA-1090 / DSM 15013)).